Reading from the N-terminus, the 428-residue chain is Glutamate-1-semialdehyde 2,1-aminomutase (428 aa).

K267 is modified (N6-(pyridoxal phosphate)lysine).

The protein belongs to the class-III pyridoxal-phosphate-dependent aminotransferase family. HemL subfamily. As to quaternary structure, homodimer. It depends on pyridoxal 5'-phosphate as a cofactor.

Its subcellular location is the cytoplasm. It carries out the reaction (S)-4-amino-5-oxopentanoate = 5-aminolevulinate. Its pathway is porphyrin-containing compound metabolism; protoporphyrin-IX biosynthesis; 5-aminolevulinate from L-glutamyl-tRNA(Glu): step 2/2. The polypeptide is Glutamate-1-semialdehyde 2,1-aminomutase (Flavobacterium johnsoniae (strain ATCC 17061 / DSM 2064 / JCM 8514 / BCRC 14874 / CCUG 350202 / NBRC 14942 / NCIMB 11054 / UW101) (Cytophaga johnsonae)).